The sequence spans 123 residues: Large ribosomal subunit protein uL14 (123 aa).

This sequence belongs to the universal ribosomal protein uL14 family. In terms of assembly, part of the 50S ribosomal subunit. Forms a cluster with proteins L3 and L19. In the 70S ribosome, L14 and L19 interact and together make contacts with the 16S rRNA in bridges B5 and B8.

Its function is as follows. Binds to 23S rRNA. Forms part of two intersubunit bridges in the 70S ribosome. This is Large ribosomal subunit protein uL14 from Escherichia coli O6:K15:H31 (strain 536 / UPEC).